A 73-amino-acid chain; its full sequence is Guanine nucleotide-binding protein G(I)/G(S)/G(O) subunit gamma-11 (73 aa).

Positions 54 to 73 (VKGIPEDKNPFKEKGSCIIS) are disordered. Cys-70 is subject to Cysteine methyl ester. Residue Cys-70 is the site of S-farnesyl cysteine attachment. A propeptide spans 71-73 (IIS) (removed in mature form).

The protein belongs to the G protein gamma family. As to quaternary structure, g proteins are composed of 3 units, alpha, beta and gamma. Interacts with beta-1 and beta-3, but not with beta-2.

It is found in the cell membrane. Guanine nucleotide-binding proteins (G proteins) are involved as a modulator or transducer in various transmembrane signaling systems. The beta and gamma chains are required for the GTPase activity, for replacement of GDP by GTP, and for G protein-effector interaction. The polypeptide is Guanine nucleotide-binding protein G(I)/G(S)/G(O) subunit gamma-11 (GNG11) (Bos taurus (Bovine)).